The primary structure comprises 357 residues: DNA replication and repair protein RecF (357 aa).

ATP is bound at residue 30 to 37 (GANGSGKT).

It belongs to the RecF family.

The protein localises to the cytoplasm. In terms of biological role, the RecF protein is involved in DNA metabolism; it is required for DNA replication and normal SOS inducibility. RecF binds preferentially to single-stranded, linear DNA. It also seems to bind ATP. In Escherichia coli O7:K1 (strain IAI39 / ExPEC), this protein is DNA replication and repair protein RecF.